We begin with the raw amino-acid sequence, 100 residues long: Aspartyl/glutamyl-tRNA(Asn/Gln) amidotransferase subunit C (100 aa).

This sequence belongs to the GatC family. In terms of assembly, heterotrimer of A, B and C subunits.

The catalysed reaction is L-glutamyl-tRNA(Gln) + L-glutamine + ATP + H2O = L-glutaminyl-tRNA(Gln) + L-glutamate + ADP + phosphate + H(+). It carries out the reaction L-aspartyl-tRNA(Asn) + L-glutamine + ATP + H2O = L-asparaginyl-tRNA(Asn) + L-glutamate + ADP + phosphate + 2 H(+). Allows the formation of correctly charged Asn-tRNA(Asn) or Gln-tRNA(Gln) through the transamidation of misacylated Asp-tRNA(Asn) or Glu-tRNA(Gln) in organisms which lack either or both of asparaginyl-tRNA or glutaminyl-tRNA synthetases. The reaction takes place in the presence of glutamine and ATP through an activated phospho-Asp-tRNA(Asn) or phospho-Glu-tRNA(Gln). This chain is Aspartyl/glutamyl-tRNA(Asn/Gln) amidotransferase subunit C, found in Rickettsia canadensis (strain McKiel).